The sequence spans 435 residues: Ribulose bisphosphate carboxylase large chain (435 aa).

The substrate site is built by N104 and T154. K156 serves as the catalytic Proton acceptor. K158 is a substrate binding site. Mg(2+)-binding residues include K182, D184, and E185. K182 carries the N6-carboxylysine modification. H275 serves as the catalytic Proton acceptor. R276, H308, and S360 together coordinate substrate.

The protein belongs to the RuBisCO large chain family. Type I subfamily. As to quaternary structure, heterohexadecamer of 8 large chains and 8 small chains. Mg(2+) is required as a cofactor.

It localises to the plastid. Its subcellular location is the chloroplast. It catalyses the reaction 2 (2R)-3-phosphoglycerate + 2 H(+) = D-ribulose 1,5-bisphosphate + CO2 + H2O. The catalysed reaction is D-ribulose 1,5-bisphosphate + O2 = 2-phosphoglycolate + (2R)-3-phosphoglycerate + 2 H(+). Functionally, ruBisCO catalyzes two reactions: the carboxylation of D-ribulose 1,5-bisphosphate, the primary event in carbon dioxide fixation, as well as the oxidative fragmentation of the pentose substrate in the photorespiration process. Both reactions occur simultaneously and in competition at the same active site. The protein is Ribulose bisphosphate carboxylase large chain of Euglena pisciformis.